We begin with the raw amino-acid sequence, 656 residues long: MTSFSHLSRLRMSAFLPHVCLQCRLKTVSSLPAQSSASSLLQAVRHASSARPRRRTPSRMTLSPNVAQSTVKYGEKRKSVRHQNGPFGGMNQRRANLRDRQRPRSQAELKRTSFKKDKDGSEKKQPELFKALKMQTALSSVSYGRRTSIKSKISNITSFDQFDLLPSVRQSVYDSALPGLEYVTPTPIQRLAIPAILRQGSATPKPEEGQEDMPRFDQYLLAAETGSGKTLAYLLPVVDAIKRTEAKDKEEEERMAKEELEKEQEQAKEKNQNLFELESPGEEEEPINAPKSVVKPKAIILVPTSELVEQIGRIVKQLAHTVKYRSALLASNYTPRKIRKTLFNPNGLDILVTTPYLVASIAEANPYIFSRVTHLVVDEADSLFDKSFSPKTNTIIDRTAPTLKQLILCSATIPRSLDNRLRERFPQIRRLVTPNLHAIPRRVQLGVVDIDKEPYRGRRHLACADAIWSIGRSGNPYDADVGYQVTGQKEPKSIIVFVNERETAAEVAEFLVTKGINAVSLTRDTSEKRQAQILAEFTTEKNPPQPEDYKMLKGNRSDDDSVPFVNVRPGNERSNRLSNTKVLVVTDLGSRGIDTVAVKTVILYDVPHSTIDFIHRLGRLGRMGRRGRGIVLVGKKDRKDVVREVREAMYRGQALI.

A mitochondrion-targeting transit peptide spans 1–46 (MTSFSHLSRLRMSAFLPHVCLQCRLKTVSSLPAQSSASSLLQAVRH). Residues 42–125 (QAVRHASSAR…KDKDGSEKKQ (84 aa)) form a disordered region. Over residues 60-71 (MTLSPNVAQSTV) the composition is skewed to polar residues. The span at 96 to 125 (NLRDRQRPRSQAELKRTSFKKDKDGSEKKQ) shows a compositional bias: basic and acidic residues. Positions 157–190 (TSFDQFDLLPSVRQSVYDSALPGLEYVTPTPIQR) match the Q motif motif. The Helicase ATP-binding domain occupies 210-431 (QEDMPRFDQY…RERFPQIRRL (222 aa)). 223 to 230 (AETGSGKT) serves as a coordination point for ATP. Residues 246-270 (AKDKEEEERMAKEELEKEQEQAKEK) are disordered. Positions 378 to 381 (DEAD) match the DEAD box motif. The region spanning 480 to 656 (DVGYQVTGQK…EAMYRGQALI (177 aa)) is the Helicase C-terminal domain.

It belongs to the DEAD box helicase family. MRH4 subfamily.

The protein localises to the mitochondrion. It carries out the reaction ATP + H2O = ADP + phosphate + H(+). Its function is as follows. ATP-binding RNA helicase involved in mitochondrial RNA metabolism. Required for maintenance of mitochondrial DNA. The protein is ATP-dependent RNA helicase MRH4, mitochondrial (MRH4) of Coccidioides immitis (strain RS) (Valley fever fungus).